Here is an 815-residue protein sequence, read N- to C-terminus: ABC transporter G family member 7 (815 aa).

2 disordered regions span residues 81 to 141 (NNID…TPNF) and 177 to 249 (KQIK…TNGK). The stretch at 164 to 199 (ENISYKTENRNYKKQIKDEKKRKKKLEMERSNSSNS) forms a coiled coil. A compositionally biased stretch (low complexity) spans 194-210 (SNSSNSNSSYDVESSAS). Residues 211–248 (GLQTPQQSRSSILPTNSLNISKIDQSMNPQQTRSTTNG) show a composition bias toward polar residues. Positions 242–485 (TRSTTNGKIE…SLPNQYQCPN (244 aa)) constitute an ABC transporter domain. An ATP-binding site is contributed by 274–281 (GPSGSGKS). The ABC transmembrane type-2 domain maps to 562-810 (TQYITRLSGG…VSGYWAISKL (249 aa)). Helical transmembrane passes span 568–588 (LSGGFMIGLLFSACFGTLSPS), 598–618 (ILFFLIAVLNLIPFTCITLFL), 647–667 (AFIQFLVSLIVSLLVYTINHL), 675–695 (FITYFILYLINLLSDLYIIAI), 706–726 (FIYGTTISITFLLFMGHLVPV), 732–752 (SFGWIHWLNPLYYGYATVMVA), and 788–808 (GIGIIILWICFFFVSGYWAIS).

This sequence belongs to the ABC transporter superfamily. ABCG family.

It is found in the membrane. The polypeptide is ABC transporter G family member 7 (abcG7) (Dictyostelium discoideum (Social amoeba)).